The following is an 83-amino-acid chain: NAD(P)H-quinone oxidoreductase subunit L (83 aa).

2 consecutive transmembrane segments (helical) span residues 18-38 (IGGY…LLFF) and 53-73 (FSVY…APFL).

The protein belongs to the complex I NdhL subunit family. In terms of assembly, NDH-1 can be composed of about 15 different subunits; different subcomplexes with different compositions have been identified which probably have different functions.

It localises to the cellular thylakoid membrane. It carries out the reaction a plastoquinone + NADH + (n+1) H(+)(in) = a plastoquinol + NAD(+) + n H(+)(out). It catalyses the reaction a plastoquinone + NADPH + (n+1) H(+)(in) = a plastoquinol + NADP(+) + n H(+)(out). Functionally, NDH-1 shuttles electrons from an unknown electron donor, via FMN and iron-sulfur (Fe-S) centers, to quinones in the respiratory and/or the photosynthetic chain. The immediate electron acceptor for the enzyme in this species is believed to be plastoquinone. Couples the redox reaction to proton translocation, and thus conserves the redox energy in a proton gradient. Cyanobacterial NDH-1 also plays a role in inorganic carbon-concentration. In Synechococcus sp. (strain CC9311), this protein is NAD(P)H-quinone oxidoreductase subunit L.